The following is a 346-amino-acid chain: UDP-3-O-acylglucosamine N-acyltransferase (346 aa).

The active-site Proton acceptor is the histidine 253.

Belongs to the transferase hexapeptide repeat family. LpxD subfamily. In terms of assembly, homotrimer.

The enzyme catalyses a UDP-3-O-[(3R)-3-hydroxyacyl]-alpha-D-glucosamine + a (3R)-hydroxyacyl-[ACP] = a UDP-2-N,3-O-bis[(3R)-3-hydroxyacyl]-alpha-D-glucosamine + holo-[ACP] + H(+). Its pathway is bacterial outer membrane biogenesis; LPS lipid A biosynthesis. In terms of biological role, catalyzes the N-acylation of UDP-3-O-acylglucosamine using 3-hydroxyacyl-ACP as the acyl donor. Is involved in the biosynthesis of lipid A, a phosphorylated glycolipid that anchors the lipopolysaccharide to the outer membrane of the cell. The protein is UDP-3-O-acylglucosamine N-acyltransferase of Rickettsia prowazekii (strain Madrid E).